The chain runs to 375 residues: Alcohol dehydrogenase 6 (375 aa).

Ser-23 carries the phosphoserine modification. Zn(2+) is bound by residues Cys-47, His-69, Cys-99, Cys-102, Cys-105, Cys-113, and Cys-175. Residues 200-205 (GLGGVG), Asp-224, Lys-229, 293-295 (VGL), and Arg-370 contribute to the NAD(+) site.

It belongs to the zinc-containing alcohol dehydrogenase family. Class-V subfamily. As to quaternary structure, dimer. It depends on Zn(2+) as a cofactor.

It is found in the cytoplasm. It carries out the reaction a primary alcohol + NAD(+) = an aldehyde + NADH + H(+). The catalysed reaction is a secondary alcohol + NAD(+) = a ketone + NADH + H(+). Functionally, alcohol dehydrogenase. Catalyzes the NAD-dependent oxidation of primary alcohols to the corresponding aldehydes. Oxidizes secondary alcohols to the corresponding ketones. This chain is Alcohol dehydrogenase 6 (ADH6), found in Pongo abelii (Sumatran orangutan).